We begin with the raw amino-acid sequence, 368 residues long: Galactoside 2-alpha-L-fucosyltransferase SEC1 (368 aa).

Positions methionine 1–glycine 20 are disordered. The Cytoplasmic segment spans residues methionine 1 to arginine 31. A helical transmembrane segment spans residues phenylalanine 32–serine 52. Residues threonine 53 to proline 368 lie on the Lumenal side of the membrane.

It belongs to the glycosyltransferase 11 family. As to expression, kidney.

The protein resides in the golgi apparatus. It localises to the golgi stack membrane. The enzyme catalyses a ganglioside GM1 + GDP-beta-L-fucose = a ganglioside Fuc-GM1 + GDP + H(+). It participates in protein modification; protein glycosylation. Catalyzes the transfer of alpha 1,2-linked fucose to ganglioside GM1 and galacto-N-biose. This chain is Galactoside 2-alpha-L-fucosyltransferase SEC1, found in Bos taurus (Bovine).